Here is a 338-residue protein sequence, read N- to C-terminus: tRNA N6-adenosine threonylcarbamoyltransferase (338 aa).

The Fe cation site is built by H110 and H114. Substrate is bound by residues 132-136, D165, G178, and N274; that span reads VLSGG. D298 lines the Fe cation pocket.

Belongs to the KAE1 / TsaD family. The cofactor is Fe(2+).

The protein resides in the cytoplasm. It carries out the reaction L-threonylcarbamoyladenylate + adenosine(37) in tRNA = N(6)-L-threonylcarbamoyladenosine(37) in tRNA + AMP + H(+). Required for the formation of a threonylcarbamoyl group on adenosine at position 37 (t(6)A37) in tRNAs that read codons beginning with adenine. Is involved in the transfer of the threonylcarbamoyl moiety of threonylcarbamoyl-AMP (TC-AMP) to the N6 group of A37, together with TsaE and TsaB. TsaD likely plays a direct catalytic role in this reaction. This Borrelia duttonii (strain Ly) protein is tRNA N6-adenosine threonylcarbamoyltransferase.